Here is a 121-residue protein sequence, read N- to C-terminus: Large ribosomal subunit protein uL24 (121 aa).

The protein belongs to the universal ribosomal protein uL24 family. Part of the 50S ribosomal subunit.

Its function is as follows. One of two assembly initiator proteins, it binds directly to the 5'-end of the 23S rRNA, where it nucleates assembly of the 50S subunit. Located at the polypeptide exit tunnel on the outside of the subunit. This chain is Large ribosomal subunit protein uL24, found in Thermococcus kodakarensis (strain ATCC BAA-918 / JCM 12380 / KOD1) (Pyrococcus kodakaraensis (strain KOD1)).